We begin with the raw amino-acid sequence, 262 residues long: uncharacterized protein (262 aa).

One can recognise a Radical SAM core domain in the interval 1–211 (MAFHVMIIPS…LLYLLDSYLE (211 aa)). Residues C13, C17, and C20 each contribute to the [4Fe-4S] cluster site.

This sequence belongs to the radical SAM superfamily. Anaerobic sulfatase-maturating enzyme family. Requires [4Fe-4S] cluster as cofactor.

This is an uncharacterized protein from Methanothermobacter thermautotrophicus (strain ATCC 29096 / DSM 1053 / JCM 10044 / NBRC 100330 / Delta H) (Methanobacterium thermoautotrophicum).